A 255-amino-acid polypeptide reads, in one-letter code: Glutamate racemase (255 aa).

Residues 7-8 (DS) and 39-40 (YG) each bind substrate. Residue Cys70 is the Proton donor/acceptor of the active site. 71 to 72 (NT) lines the substrate pocket. The active-site Proton donor/acceptor is the Cys181. 182 to 183 (TH) provides a ligand contact to substrate.

Belongs to the aspartate/glutamate racemases family.

The enzyme catalyses L-glutamate = D-glutamate. Its pathway is cell wall biogenesis; peptidoglycan biosynthesis. In terms of biological role, provides the (R)-glutamate required for cell wall biosynthesis. This chain is Glutamate racemase, found in Helicobacter acinonychis (strain Sheeba).